Here is a 523-residue protein sequence, read N- to C-terminus: 2-isopropylmalate synthase (523 aa).

The 263-residue stretch at 5-267 (VIIFDTTLRD…ETGINAKEIH (263 aa)) folds into the Pyruvate carboxyltransferase domain. The Mn(2+) site is built by D14, H202, H204, and N238. Positions 392–523 (GLQQLVVHSD…KQARTELGGV (132 aa)) are regulatory domain.

The protein belongs to the alpha-IPM synthase/homocitrate synthase family. LeuA type 1 subfamily. In terms of assembly, homodimer. It depends on Mn(2+) as a cofactor.

It is found in the cytoplasm. The enzyme catalyses 3-methyl-2-oxobutanoate + acetyl-CoA + H2O = (2S)-2-isopropylmalate + CoA + H(+). It functions in the pathway amino-acid biosynthesis; L-leucine biosynthesis; L-leucine from 3-methyl-2-oxobutanoate: step 1/4. Functionally, catalyzes the condensation of the acetyl group of acetyl-CoA with 3-methyl-2-oxobutanoate (2-ketoisovalerate) to form 3-carboxy-3-hydroxy-4-methylpentanoate (2-isopropylmalate). The protein is 2-isopropylmalate synthase of Shewanella loihica (strain ATCC BAA-1088 / PV-4).